Here is a 355-residue protein sequence, read N- to C-terminus: Peptide chain release factor 1 (355 aa).

Gln233 is subject to N5-methylglutamine.

This sequence belongs to the prokaryotic/mitochondrial release factor family. In terms of processing, methylated by PrmC. Methylation increases the termination efficiency of RF1.

The protein localises to the cytoplasm. Functionally, peptide chain release factor 1 directs the termination of translation in response to the peptide chain termination codons UAG and UAA. This chain is Peptide chain release factor 1, found in Bacillus mycoides (strain KBAB4) (Bacillus weihenstephanensis).